The chain runs to 246 residues: TLC domain-containing protein 2 (246 aa).

Helical transmembrane passes span 5–25 (SVILTTGSSVGFFKLVNYGLG), 43–63 (ISTSFVHSLITGVWSVLCFCM), 79–99 (SHALVSVSIGYFIYDFLDMVI), 107–127 (WELLFHHVVVITCFGISVLTC), 128–148 (RYVGFAVVALLVEINSVFLHL), and 199–219 (FSYTIGSVGLAIMTAMNIVLF). Residues 35 to 231 (RNAWKWNNIS…LMRSDFMKAS (197 aa)) enclose the TLC domain.

This sequence belongs to the TLCD family.

It is found in the cell membrane. Its function is as follows. Regulates the composition and fluidity of the plasma membrane. Inhibits the incorporation of membrane-fluidizing phospholipids containing omega-3 long-chain polyunsaturated fatty acids (LCPUFA) and thereby promotes membrane rigidity. Does not appear to have any effect on LCPUFA synthesis. The protein is TLC domain-containing protein 2 (tlcd2) of Danio rerio (Zebrafish).